We begin with the raw amino-acid sequence, 292 residues long: Elongation factor Ts (292 aa).

The segment at 79 to 82 is involved in Mg(2+) ion dislocation from EF-Tu; that stretch reads TDFV.

This sequence belongs to the EF-Ts family.

Its subcellular location is the cytoplasm. Associates with the EF-Tu.GDP complex and induces the exchange of GDP to GTP. It remains bound to the aminoacyl-tRNA.EF-Tu.GTP complex up to the GTP hydrolysis stage on the ribosome. In Mycoplasmoides gallisepticum (strain R(low / passage 15 / clone 2)) (Mycoplasma gallisepticum), this protein is Elongation factor Ts.